Here is a 568-residue protein sequence, read N- to C-terminus: 2-succinyl-5-enolpyruvyl-6-hydroxy-3-cyclohexene-1-carboxylate synthase (568 aa).

The protein belongs to the TPP enzyme family. MenD subfamily. Homodimer. Mg(2+) is required as a cofactor. Requires Mn(2+) as cofactor. Thiamine diphosphate serves as cofactor.

The catalysed reaction is isochorismate + 2-oxoglutarate + H(+) = 5-enolpyruvoyl-6-hydroxy-2-succinyl-cyclohex-3-ene-1-carboxylate + CO2. It functions in the pathway quinol/quinone metabolism; 1,4-dihydroxy-2-naphthoate biosynthesis; 1,4-dihydroxy-2-naphthoate from chorismate: step 2/7. The protein operates within quinol/quinone metabolism; menaquinone biosynthesis. In terms of biological role, catalyzes the thiamine diphosphate-dependent decarboxylation of 2-oxoglutarate and the subsequent addition of the resulting succinic semialdehyde-thiamine pyrophosphate anion to isochorismate to yield 2-succinyl-5-enolpyruvyl-6-hydroxy-3-cyclohexene-1-carboxylate (SEPHCHC). The chain is 2-succinyl-5-enolpyruvyl-6-hydroxy-3-cyclohexene-1-carboxylate synthase from Histophilus somni (strain 129Pt) (Haemophilus somnus).